A 292-amino-acid chain; its full sequence is GTP cyclohydrolase FolE2 (292 aa).

This sequence belongs to the GTP cyclohydrolase IV family.

It carries out the reaction GTP + H2O = 7,8-dihydroneopterin 3'-triphosphate + formate + H(+). The protein operates within cofactor biosynthesis; 7,8-dihydroneopterin triphosphate biosynthesis; 7,8-dihydroneopterin triphosphate from GTP: step 1/1. Functionally, converts GTP to 7,8-dihydroneopterin triphosphate. The chain is GTP cyclohydrolase FolE2 from Staphylococcus aureus (strain Newman).